The following is a 308-amino-acid chain: Elongation factor Ts (308 aa).

The tract at residues 80 to 83 (TDFV) is involved in Mg(2+) ion dislocation from EF-Tu.

It belongs to the EF-Ts family.

The protein resides in the cytoplasm. In terms of biological role, associates with the EF-Tu.GDP complex and induces the exchange of GDP to GTP. It remains bound to the aminoacyl-tRNA.EF-Tu.GTP complex up to the GTP hydrolysis stage on the ribosome. This Agrobacterium fabrum (strain C58 / ATCC 33970) (Agrobacterium tumefaciens (strain C58)) protein is Elongation factor Ts.